We begin with the raw amino-acid sequence, 611 residues long: Phosphomethylpyrimidine synthase (611 aa).

Substrate-binding positions include Asn-218, Met-247, Tyr-276, His-312, 332 to 334 (SRG), 373 to 376 (DGLR), and Glu-412. His-416 serves as a coordination point for Zn(2+). Tyr-439 is a binding site for substrate. His-480 is a binding site for Zn(2+). Cys-560, Cys-563, and Cys-568 together coordinate [4Fe-4S] cluster.

This sequence belongs to the ThiC family. Homodimer. Requires [4Fe-4S] cluster as cofactor.

The enzyme catalyses 5-amino-1-(5-phospho-beta-D-ribosyl)imidazole + S-adenosyl-L-methionine = 4-amino-2-methyl-5-(phosphooxymethyl)pyrimidine + CO + 5'-deoxyadenosine + formate + L-methionine + 3 H(+). Its pathway is cofactor biosynthesis; thiamine diphosphate biosynthesis. In terms of biological role, catalyzes the synthesis of the hydroxymethylpyrimidine phosphate (HMP-P) moiety of thiamine from aminoimidazole ribotide (AIR) in a radical S-adenosyl-L-methionine (SAM)-dependent reaction. This chain is Phosphomethylpyrimidine synthase, found in Caulobacter sp. (strain K31).